Here is a 420-residue protein sequence, read N- to C-terminus: Phosphoribosylamine--glycine ligase (420 aa).

The ATP-grasp domain maps to 108-314 (KQIMVKYGIP…FAQNIDDILH (207 aa)). 134–195 (IEEQGAPIVV…EEFLAGEEFS (62 aa)) contributes to the ATP binding site. Residues Glu284 and Asn286 each contribute to the Mg(2+) site.

It belongs to the GARS family. Mg(2+) serves as cofactor. The cofactor is Mn(2+).

It carries out the reaction 5-phospho-beta-D-ribosylamine + glycine + ATP = N(1)-(5-phospho-beta-D-ribosyl)glycinamide + ADP + phosphate + H(+). Its pathway is purine metabolism; IMP biosynthesis via de novo pathway; N(1)-(5-phospho-D-ribosyl)glycinamide from 5-phospho-alpha-D-ribose 1-diphosphate: step 2/2. This chain is Phosphoribosylamine--glycine ligase, found in Streptococcus suis.